Here is a 424-residue protein sequence, read N- to C-terminus: Hemagglutinin-esterase (424 aa).

The first 16 residues, 1–16, serve as a signal peptide directing secretion; sequence MFLLPRFVLVSCIIGS. The segment at 7 to 127 is esterase domain 1; sequence FVLVSCIIGS…SNDIWMQNKG (121 aa). Over 17 to 392 the chain is Virion surface; that stretch reads LGFDNPPTNV…PICVYDPLPI (376 aa). The Nucleophile role is filled by Ser40. Residues Cys44 and Cys65 are joined by a disulfide bond. 5 N-linked (GlcNAc...) asparagine; by host glycosylation sites follow: Asn54, Asn89, Asn153, Asn236, and Asn301. Cystine bridges form between Cys113–Cys162, Cys197–Cys276, and Cys205–Cys249. The receptor binding stretch occupies residues 128–266; sequence LFYTQVYKNM…GNYLAISNEL (139 aa). Residues 267–379 are esterase domain 2; the sequence is LLTVPTKAIC…RCPTAADINT (113 aa). Cys307 and Cys312 are joined by a disulfide. Asn316 carries an N-linked (GlcNAc...) asparagine; by host glycan. Active-site charge relay system residues include Asp326 and His329. Cys347 and Cys371 are joined by a disulfide. N-linked (GlcNAc...) asparagine; by host glycosylation is present at Asn358. The helical transmembrane segment at 393-413 threads the bilayer; that stretch reads ILLGILLGVAVIIIVVLLLYF. Topologically, residues 414–424 are intravirion; the sequence is MVDNGTRLHDA. N-linked (GlcNAc...) asparagine; by host glycosylation is present at Asn417.

It belongs to the influenza type C/coronaviruses hemagglutinin-esterase family. As to quaternary structure, homodimer; disulfide-linked. Forms a complex with the M protein in the pre-Golgi. Associates then with S-M complex to form a ternary complex S-M-HE. Post-translationally, N-glycosylated in the RER. In terms of processing, N-glycosylated in the host RER.

Its subcellular location is the virion membrane. The protein localises to the host cell membrane. The enzyme catalyses N-acetyl-9-O-acetylneuraminate + H2O = N-acetylneuraminate + acetate + H(+). It catalyses the reaction N-acetyl-4-O-acetylneuraminate + H2O = N-acetylneuraminate + acetate + H(+). Structural protein that makes short spikes at the surface of the virus. Contains receptor binding and receptor-destroying activities. Mediates de-O-acetylation of N-acetyl-4-O-acetylneuraminic acid, which is probably the receptor determinant recognized by the virus on the surface of erythrocytes and susceptible cells. This receptor-destroying activity is important for virus release as it probably helps preventing self-aggregation and ensures the efficient spread of the progeny virus from cell to cell. May serve as a secondary viral attachment protein for initiating infection, the spike protein being the major one. May become a target for both the humoral and the cellular branches of the immune system. This is Hemagglutinin-esterase from Bovine coronavirus (strain 98TXSF-110-ENT) (BCoV-ENT).